Here is a 418-residue protein sequence, read N- to C-terminus: Delta(14)-sterol reductase TM7SF2 (418 aa).

The next 6 helical transmembrane spans lie at 13-35 (FGGPLGAAALLLLLPATMFHLLL), 62-81 (ALLLWLAWLGLQAALYLLPA), 102-124 (GFQALVLTALLVGLGMSAGLPLG), 129-148 (MLLPLAFVATLTAFIFSLFL), 255-277 (FGFMLAFGDMAWVPFTYSLQAQF), and 287-304 (LPMASVICLINATGYYIF). NADP(+) contacts are provided by residues K311, R315, L338, W343, and 350 to 351 (NY). Residues 355 to 377 (LIMALAWSLPCGVSHLLPYFYLL) traverse the membrane as a helical segment. NADP(+) is bound by residues D390, 394–398 (CLQKY), and Y405.

Belongs to the ERG4/ERG24 family. In terms of tissue distribution, expressed in adult heart, brain, pancreas, lung, liver, skeletal muscle, kidney, ovary, prostate, testis and adrenal gland, but not detected in placenta, spleen, thymus, small intestine, colon (mucosal lining), or peripheral blood leukocytes.

Its subcellular location is the microsome membrane. The protein resides in the endoplasmic reticulum membrane. The catalysed reaction is 4,4-dimethyl-5alpha-cholesta-8,24-dien-3beta-ol + NADP(+) = 4,4-dimethyl-5alpha-cholesta-8,14,24-trien-3beta-ol + NADPH + H(+). It carries out the reaction 5alpha-cholest-8,14-dien-3beta-ol + NADPH + H(+) = 5alpha-cholest-8-en-3beta-ol + NADP(+). The enzyme catalyses 4,4-dimethyl-8,14-cholestadien-3beta-ol + NADPH + H(+) = 4,4-dimethyl-5alpha-cholest-8-en-3beta-ol + NADP(+). The protein operates within steroid biosynthesis; cholesterol biosynthesis. Catalyzes the reduction of the C14-unsaturated bond of lanosterol, as part of the metabolic pathway leading to cholesterol biosynthesis. This chain is Delta(14)-sterol reductase TM7SF2 (TM7SF2), found in Homo sapiens (Human).